A 551-amino-acid chain; its full sequence is MDRRRFIKGSMAMAAVCGTSGIASLFSQAAFAADSDIADGQTQRFDLSILQSMAHDLAQTAWRGAPRPLPDTLATMTPQAYNSIQYDAEKSLWHNVENRQLDAQFFHMGMGFRRRVRMFSVDPATHLAREIHFRPELFKYNDAGVDTKQLEGQSDLGFAGFRVFKAPELARRDVVSFLGASYFRAVDDTYQYGLSARGLAIDTYTDSKEEFPDFTAFWFDTVKPGATTFTVYALLDSASITGAYKFTIHCEKNQVIMDVENHLYARKDIKQLGIAPMTSMFSCGTNERRMCDTIHPQIHDSDRLSMWRGNGEWICRPLNNPQKLQFNAYTDNNPKGFGLLQLDRDFSHYQDIMGWYNKRPSLWVEPRNKWGKGTIGLMEIPTTGETLDNIVCFWQPEKAVKAGDEFAFQYRLYWSAQPPVHCPLARVMATRTGMGGFPEGWAPGEHYPEKWARRFAVDFVGGDLKAAAPKGIEPVITLSSGEAKQIEILYIEPIDGYRIQFDWYPTSDSTDPVDMRMYLRCQGDAISETWLYQYFPPAPDKRQYVDDRVMS.

The segment at residues 1 to 32 (MDRRRFIKGSMAMAAVCGTSGIASLFSQAAFA) is a signal peptide (tat-type signal).

The protein belongs to the OpgD/OpgG family. Post-translationally, predicted to be exported by the Tat system. The position of the signal peptide cleavage has not been experimentally proven.

Its subcellular location is the periplasm. It functions in the pathway glycan metabolism; osmoregulated periplasmic glucan (OPG) biosynthesis. Probably involved in the control of the structural glucose backbone of osmoregulated periplasmic glucans (OPGs). The chain is Glucans biosynthesis protein D from Escherichia coli O127:H6 (strain E2348/69 / EPEC).